The primary structure comprises 367 residues: Probable cinnamyl alcohol dehydrogenase (367 aa).

Residue Cys47 coordinates Zn(2+). Position 49 (Thr49) interacts with NADP(+). Positions 69, 70, 100, 103, 106, 114, and 163 each coordinate Zn(2+). Residues Thr167, 188–193, 211–216, Thr251, Gly275, and 298–300 each bind NADP(+); these read GLGGVG, SSSSKK, and SFI.

The protein belongs to the zinc-containing alcohol dehydrogenase family. Homodimer. Requires Zn(2+) as cofactor.

It catalyses the reaction (E)-cinnamyl alcohol + NADP(+) = (E)-cinnamaldehyde + NADPH + H(+). It carries out the reaction (E)-coniferol + NADP(+) = (E)-coniferaldehyde + NADPH + H(+). The catalysed reaction is (E)-sinapyl alcohol + NADP(+) = (E)-sinapaldehyde + NADPH + H(+). The enzyme catalyses (E)-4-coumaroyl alcohol + NADP(+) = (E)-4-coumaraldehyde + NADPH + H(+). It catalyses the reaction (E)-caffeyl alcohol + NADP(+) = (E)-caffeyl aldehyde + NADPH + H(+). Its pathway is aromatic compound metabolism; phenylpropanoid biosynthesis. Functionally, involved in lignin biosynthesis. May catalyze the final step specific for the production of lignin monomers, like coniferyl alcohol, sinapyl alcohol and 4-coumaryl alcohol. The sequence is that of Probable cinnamyl alcohol dehydrogenase from Zea mays (Maize).